Reading from the N-terminus, the 216-residue chain is Probable nicotinate-nucleotide adenylyltransferase (216 aa).

Belongs to the NadD family.

The enzyme catalyses nicotinate beta-D-ribonucleotide + ATP + H(+) = deamido-NAD(+) + diphosphate. It functions in the pathway cofactor biosynthesis; NAD(+) biosynthesis; deamido-NAD(+) from nicotinate D-ribonucleotide: step 1/1. Catalyzes the reversible adenylation of nicotinate mononucleotide (NaMN) to nicotinic acid adenine dinucleotide (NaAD). This Geobacillus thermodenitrificans (strain NG80-2) protein is Probable nicotinate-nucleotide adenylyltransferase.